The chain runs to 337 residues: Dolichyl-phosphate beta-glucosyltransferase ALG5C (337 aa).

The Lumenal segment spans residues 1 to 6; the sequence is MNDLPP. A helical membrane pass occupies residues 7-27; the sequence is IANLISNILFVLLIITFLYAL. Residues 28–337 lie on the Cytoplasmic side of the membrane; it reads CSRFVSDKTL…ADTPISDFEV (310 aa).

Belongs to the glycosyltransferase 2 family.

Its subcellular location is the endoplasmic reticulum membrane. It carries out the reaction a di-trans,poly-cis-dolichyl phosphate + UDP-alpha-D-glucose = a di-trans,poly-cis-dolichyl beta-D-glucosyl phosphate + UDP. Its pathway is protein modification; protein glycosylation. In terms of biological role, dolichyl-phosphate beta-glucosyltransferase involved in the glycosylation of glycoproteins through the synthesis of dolichyl beta-D-glucosyl phosphate which serves as a sugar donor for transfer of three glucose residues to the Man-9-GlcNAc-2-PP-dolichol precursor to N-glycans. The protein is Dolichyl-phosphate beta-glucosyltransferase ALG5C of Trichomonas vaginalis (strain ATCC PRA-98 / G3).